Reading from the N-terminus, the 352-residue chain is ADP-ribosylation factor GTPase-activating protein GCS1 (352 aa).

The 117-residue stretch at 11 to 127 folds into the Arf-GAP domain; that stretch reads RRRLLQLQKI…LTCLCEDRVF (117 aa). A C4-type zinc finger spans residues 26–49; the sequence is CMDCGAPNPQWATPKFGAFICLEC. A compositionally biased stretch (low complexity) spans 138–151; the sequence is SKLSATSQTAASAT. 2 disordered regions span residues 138–181 and 196–231; these read SKLS…ANFQ and NQSR…GSSN. Residue Thr-151 is modified to Phosphothreonine. Ser-157 is modified (phosphoserine). A Phosphothreonine modification is found at Thr-161. The residue at position 168 (Ser-168) is a Phosphoserine. The span at 168–179 shows a compositional bias: polar residues; that stretch reads SATPANSSNGAN. Thr-170 carries the post-translational modification Phosphothreonine. The residue at position 260 (Ser-260) is a Phosphoserine. Over residues 315–330 the composition is skewed to polar residues; sequence NGNAEDSSTAGNTTHT. Residues 315–352 form a disordered region; the sequence is NGNAEDSSTAGNTTHTEYQKIDNNDKKNEQDEDKWDDF. Over residues 331-343 the composition is skewed to basic and acidic residues; that stretch reads EYQKIDNNDKKNE.

The protein resides in the cytoplasm. Its subcellular location is the mitochondrion. It localises to the perinuclear region. The protein localises to the golgi apparatus. Its function is as follows. GTPase-activating protein (GAP) for ARF1 and ARF2. Involved in intracellular vesicular transport. Required for transport from the trans-Golgi network. Implicated in the regulation of retrograde transport from the Golgi to the ER and in actin cytoskeletal organization. May be involved in the maintenance of mitochondrial morphology, possibly through organizing the actin cytoskeleton in Saccharomyces. This is ADP-ribosylation factor GTPase-activating protein GCS1 (GCS1) from Saccharomyces cerevisiae (strain ATCC 204508 / S288c) (Baker's yeast).